A 559-amino-acid chain; its full sequence is Tryprostatin B 6-hydroxylase (559 aa).

A run of 3 helical transmembrane segments spans residues 13–35, 48–65, and 82–104; these read PSVM…HLSY, YVRF…LLYA, and VSLL…RTLF. Cys502 provides a ligand contact to heme.

It belongs to the cytochrome P450 family. Heme serves as cofactor.

It localises to the membrane. The catalysed reaction is tryprostatin B + reduced [NADPH--hemoprotein reductase] + O2 = 6-hydroxytryprostatin B + oxidized [NADPH--hemoprotein reductase] + H2O + H(+). The protein operates within mycotoxin biosynthesis. Functionally, cytochrome P450 monooxygenase; part of the gene cluster that mediates the biosynthesis of fumitremorgins, indole alkaloids that carry not only intriguing chemical structures, but also interesting biological and pharmacological activities. The biosynthesis of fumitremorgin-type alkaloids begins by condensation of the two amino acids L-tryptophan and L-proline to brevianamide F, catalyzed by the non-ribosomal peptide synthetase ftmA. Brevianamide F is then prenylated by the prenyltransferase ftmPT1/ftmB in the presence of dimethylallyl diphosphate, resulting in the formation of tryprostatin B. The three cytochrome P450 monooxygenases, ftmP450-1/ftmC, ftmP450-2/ftmE and ftmP450-3/FtmG, are responsible for the conversion of tryprostatin B to 6-hydroxytryprostatin B, tryprostatin A to fumitremorgin C and fumitremorgin C to 12,13-dihydroxyfumitremorgin C, respectively. The putative methyltransferase ftmMT/ftmD is expected for the conversion of 6-hydroxytryprostatin B to tryprostatin A. FtmPT2/FtmH catalyzes the prenylation of 12,13-dihydroxyfumitre-morgin C in the presence of dimethylallyl diphosphate, resulting in the formation of fumitremorgin B. Fumitremorgin B is further converted to verruculogen by ftmOx1/ftmF via the insertion of an endoperoxide bond between the two prenyl moieties. In some fungal species, verruculogen is further converted to fumitremorgin A, but the enzymes involved in this step have not been identified yet. This Aspergillus fumigatus (Neosartorya fumigata) protein is Tryprostatin B 6-hydroxylase.